A 294-amino-acid polypeptide reads, in one-letter code: Beta-lactamase SME-1 (294 aa).

The first 27 residues, 1-27, serve as a signal peptide directing secretion; sequence MSNKVNFKTASFLFSVCLALSAFNAHA. A disulfide bond links Cys-72 and Cys-242. Ser-73 functions as the Nucleophile; acyl-ester intermediate in the catalytic mechanism. Residues Ser-73, Lys-76, Ser-133, and Asn-135 each contribute to the a beta-lactam site. Residue Glu-172 is the Proton acceptor of the active site. An a beta-lactam-binding site is contributed by Thr-239.

This sequence belongs to the class-A beta-lactamase family.

The enzyme catalyses a beta-lactam + H2O = a substituted beta-amino acid. With respect to regulation, partially inhibited by the beta-lactamase-blocking agents, clavulanic acid and tazobactam. Not inhibited by EDTA. In terms of biological role, class A beta-lactamase which confers resistance to the beta-lactam antibiotics, including penicillins, some cephalosporins and carbapenems, to JM109 strain E.coli. Acts via hydrolysis of the beta-lactam ring. Has penicillin-, cephalosporin- and carbapenem-hydrolyzing activities. The chain is Beta-lactamase SME-1 from Serratia marcescens.